Reading from the N-terminus, the 296-residue chain is Farnesyl diphosphate synthase (296 aa).

Positions 46, 49, and 78 each coordinate isopentenyl diphosphate. 2 residues coordinate Mg(2+): Asp-85 and Asp-91. Position 96 (Arg-96) interacts with (2E)-geranyl diphosphate. Residue Arg-97 participates in isopentenyl diphosphate binding. 4 residues coordinate (2E)-geranyl diphosphate: Lys-182, Thr-183, Gln-220, and Lys-237.

The protein belongs to the FPP/GGPP synthase family. The cofactor is Mg(2+).

Its subcellular location is the cytoplasm. The catalysed reaction is isopentenyl diphosphate + (2E)-geranyl diphosphate = (2E,6E)-farnesyl diphosphate + diphosphate. In Bacillus subtilis (strain 168), this protein is Farnesyl diphosphate synthase (ispA).